A 264-amino-acid polypeptide reads, in one-letter code: Undecaprenyl-diphosphatase (264 aa).

Helical transmembrane passes span 34 to 54 (LLNL…MGSI), 75 to 95 (LLYL…LYII), 104 to 124 (YDPS…GLYI), 137 to 157 (LSLK…LPGV), 180 to 200 (YSYL…ILFS), 207 to 227 (VISL…FIIG), and 243 to 263 (IYII…LTIL).

This sequence belongs to the UppP family.

The protein resides in the cell membrane. The catalysed reaction is di-trans,octa-cis-undecaprenyl diphosphate + H2O = di-trans,octa-cis-undecaprenyl phosphate + phosphate + H(+). Its function is as follows. Catalyzes the dephosphorylation of undecaprenyl diphosphate (UPP). This is Undecaprenyl-diphosphatase from Sulfurisphaera tokodaii (strain DSM 16993 / JCM 10545 / NBRC 100140 / 7) (Sulfolobus tokodaii).